The primary structure comprises 311 residues: Aspartate carbamoyltransferase catalytic subunit (311 aa).

The carbamoyl phosphate site is built by arginine 58 and threonine 59. Residue lysine 86 participates in L-aspartate binding. Residues arginine 108, histidine 136, and glutamine 139 each contribute to the carbamoyl phosphate site. 2 residues coordinate L-aspartate: arginine 169 and arginine 224. 2 residues coordinate carbamoyl phosphate: glycine 265 and proline 266.

It belongs to the aspartate/ornithine carbamoyltransferase superfamily. ATCase family. As to quaternary structure, heterododecamer (2C3:3R2) of six catalytic PyrB chains organized as two trimers (C3), and six regulatory PyrI chains organized as three dimers (R2).

The catalysed reaction is carbamoyl phosphate + L-aspartate = N-carbamoyl-L-aspartate + phosphate + H(+). Its pathway is pyrimidine metabolism; UMP biosynthesis via de novo pathway; (S)-dihydroorotate from bicarbonate: step 2/3. In terms of biological role, catalyzes the condensation of carbamoyl phosphate and aspartate to form carbamoyl aspartate and inorganic phosphate, the committed step in the de novo pyrimidine nucleotide biosynthesis pathway. This is Aspartate carbamoyltransferase catalytic subunit from Geobacter sulfurreducens (strain ATCC 51573 / DSM 12127 / PCA).